Reading from the N-terminus, the 835-residue chain is Leucine--tRNA ligase (835 aa).

Residues 36-46 (PYPSGKIHVGH) carry the 'HIGH' region motif. The short motif at 602-606 (KMSKS) is the 'KMSKS' region element. Residue Lys605 participates in ATP binding.

This sequence belongs to the class-I aminoacyl-tRNA synthetase family.

The protein localises to the cytoplasm. It catalyses the reaction tRNA(Leu) + L-leucine + ATP = L-leucyl-tRNA(Leu) + AMP + diphosphate. The protein is Leucine--tRNA ligase of Rickettsia peacockii (strain Rustic).